The sequence spans 140 residues: Translation initiation factor 2 subunit beta (140 aa).

Belongs to the eIF-2-beta/eIF-5 family. Heterotrimer composed of an alpha, a beta and a gamma chain.

In terms of biological role, eIF-2 functions in the early steps of protein synthesis by forming a ternary complex with GTP and initiator tRNA. The sequence is that of Translation initiation factor 2 subunit beta from Pyrococcus furiosus (strain ATCC 43587 / DSM 3638 / JCM 8422 / Vc1).